The chain runs to 138 residues: Large ribosomal subunit protein uL16 (138 aa).

This sequence belongs to the universal ribosomal protein uL16 family. As to quaternary structure, part of the 50S ribosomal subunit.

Its function is as follows. Binds 23S rRNA and is also seen to make contacts with the A and possibly P site tRNAs. The polypeptide is Large ribosomal subunit protein uL16 (Nitrosomonas europaea (strain ATCC 19718 / CIP 103999 / KCTC 2705 / NBRC 14298)).